We begin with the raw amino-acid sequence, 160 residues long: ATP synthase subunit b 3 (160 aa).

A helical transmembrane segment spans residues P5–A25.

The protein belongs to the ATPase B chain family. As to quaternary structure, F-type ATPases have 2 components, F(1) - the catalytic core - and F(0) - the membrane proton channel. F(1) has five subunits: alpha(3), beta(3), gamma(1), delta(1), epsilon(1). F(0) has three main subunits: a(1), b(2) and c(10-14). The alpha and beta chains form an alternating ring which encloses part of the gamma chain. F(1) is attached to F(0) by a central stalk formed by the gamma and epsilon chains, while a peripheral stalk is formed by the delta and b chains.

The protein resides in the cell inner membrane. Functionally, f(1)F(0) ATP synthase produces ATP from ADP in the presence of a proton or sodium gradient. F-type ATPases consist of two structural domains, F(1) containing the extramembraneous catalytic core and F(0) containing the membrane proton channel, linked together by a central stalk and a peripheral stalk. During catalysis, ATP synthesis in the catalytic domain of F(1) is coupled via a rotary mechanism of the central stalk subunits to proton translocation. Its function is as follows. Component of the F(0) channel, it forms part of the peripheral stalk, linking F(1) to F(0). The chain is ATP synthase subunit b 3 from Rhodospirillum centenum (strain ATCC 51521 / SW).